The following is a 473-amino-acid chain: 3-isopropylmalate dehydratase large subunit (473 aa).

Positions 355, 415, and 418 each coordinate [4Fe-4S] cluster. The segment at Pro-423–Leu-452 is disordered.

It belongs to the aconitase/IPM isomerase family. LeuC type 1 subfamily. Heterodimer of LeuC and LeuD. It depends on [4Fe-4S] cluster as a cofactor.

The catalysed reaction is (2R,3S)-3-isopropylmalate = (2S)-2-isopropylmalate. Its pathway is amino-acid biosynthesis; L-leucine biosynthesis; L-leucine from 3-methyl-2-oxobutanoate: step 2/4. Its function is as follows. Catalyzes the isomerization between 2-isopropylmalate and 3-isopropylmalate, via the formation of 2-isopropylmaleate. The sequence is that of 3-isopropylmalate dehydratase large subunit from Corynebacterium jeikeium (strain K411).